We begin with the raw amino-acid sequence, 253 residues long: Phosphoglycerate mutase 2 (253 aa).

Thr-3 carries the phosphothreonine modification. Substrate-binding positions include 10–17 (RHGESLWN), 23–24 (CG), Arg-62, 89–92 (ERHY), Lys-100, and 116–117 (RR). His-11 (tele-phosphohistidine intermediate) is an active-site residue. Ser-14 carries the phosphoserine modification. The active-site Proton donor/acceptor is Glu-89. Ser-118 is subject to Phosphoserine. Position 121 is a phosphothreonine (Thr-121). 2 positions are modified to phosphotyrosine: Tyr-132 and Tyr-133. Residue Ser-135 is modified to Phosphoserine. At Thr-152 the chain carries Phosphothreonine. 187 to 188 (GN) lines the substrate pocket.

This sequence belongs to the phosphoglycerate mutase family. BPG-dependent PGAM subfamily. In terms of assembly, homodimer. Interacts with ENO1. As to expression, expressed in the testes (at protein level).

It carries out the reaction (2R)-2-phosphoglycerate = (2R)-3-phosphoglycerate. The catalysed reaction is (2R)-3-phospho-glyceroyl phosphate = (2R)-2,3-bisphosphoglycerate + H(+). Its function is as follows. Interconversion of 3- and 2-phosphoglycerate with 2,3-bisphosphoglycerate as the primer of the reaction. Can also catalyze the reaction of EC 5.4.2.4 (synthase), but with a reduced activity. The polypeptide is Phosphoglycerate mutase 2 (Pgam2) (Mus musculus (Mouse)).